The primary structure comprises 284 residues: Nucleotide-binding protein CPS_4546 (284 aa).

8–15 lines the ATP pocket; sequence GRSGSGKS. Residue 56 to 59 coordinates GTP; sequence DVRN.

This sequence belongs to the RapZ-like family.

Functionally, displays ATPase and GTPase activities. The protein is Nucleotide-binding protein CPS_4546 of Colwellia psychrerythraea (strain 34H / ATCC BAA-681) (Vibrio psychroerythus).